A 410-amino-acid polypeptide reads, in one-letter code: Class E basic helix-loop-helix protein 41 (410 aa).

Lys31 is covalently cross-linked (Glycyl lysine isopeptide (Lys-Gly) (interchain with G-Cter in SUMO2)). Residues 44–99 form the bHLH domain; it reads TYKLPHRLIEKKRRDRINECIAQLKDLLPEHLKLTTLGHLEKAVVLELTLKHLKAL. Lys121 participates in a covalent cross-link: Glycyl lysine isopeptide (Lys-Gly) (interchain with G-Cter in SUMO2). Residues 131–166 form the Orange domain; it reads FHSGFQTCAKEVLQYLARFESWTPREPRCAQLVSHL. Disordered regions lie at residues 209–255 and 360–410; these read IQRT…KRPK and GATA…KDAP. Residue Lys240 forms a Glycyl lysine isopeptide (Lys-Gly) (interchain with G-Cter in SUMO2) linkage.

Homodimer. Heterodimer with BHLHE40/DEC1. Interacts with CIART. Interacts with BMAL1. Interacts with RXRA. Interacts with NR0B2 and HNF1A. Expressed in skeletal muscle, brain and lung.

It is found in the nucleus. Transcriptional repressor involved in the regulation of the circadian rhythm by negatively regulating the activity of the clock genes and clock-controlled genes. Acts as the negative limb of a novel autoregulatory feedback loop (DEC loop) which differs from the one formed by the PER and CRY transcriptional repressors (PER/CRY loop). Both these loops are interlocked as it represses the expression of PER1 and in turn is repressed by PER1/2 and CRY1/2. Represses the activity of the circadian transcriptional activator: CLOCK-BMAL1 heterodimer by competing for the binding to E-box elements (5'-CACGTG-3') found within the promoters of its target genes. Negatively regulates its own expression and the expression of DBP and BHLHE41/DEC2. Acts as a corepressor of RXR and the RXR-LXR heterodimers and represses the ligand-induced RXRA/B/G, NR1H3/LXRA, NR1H4 and VDR transactivation activity. Inhibits HNF1A-mediated transactivation of CYP1A2, CYP2E1 and CYP3A11. The sequence is that of Class E basic helix-loop-helix protein 41 (Bhlhe41) from Mus musculus (Mouse).